We begin with the raw amino-acid sequence, 30 residues long: Trypsin inhibitor 4 (30 aa).

3 disulfide bridges follow: cysteine 3-cysteine 20, cysteine 10-cysteine 22, and cysteine 16-cysteine 29.

The protein belongs to the protease inhibitor I7 (squash-type serine protease inhibitor) family.

It localises to the secreted. Functionally, inhibits trypsin. This chain is Trypsin inhibitor 4, found in Cucumis sativus (Cucumber).